The primary structure comprises 97 residues: Eotaxin (97 aa).

The N-terminal stretch at 1-23 (MQLSTALLFLLLTATSFTSQVLA) is a signal peptide. Intrachain disulfides connect Cys32-Cys57 and Cys33-Cys73. O-linked (GalNAc...) threonine glycosylation occurs at Thr94.

The protein belongs to the intercrine beta (chemokine CC) family.

Its subcellular location is the secreted. Functionally, in response to the presence of allergens, this protein directly promotes the accumulation of eosinophils (a prominent feature of allergic inflammatory reactions), but not lymphocytes, macrophages or neutrophils. Binds to CCR3. This is Eotaxin (Ccl11) from Rattus norvegicus (Rat).